The chain runs to 242 residues: tRNA (guanine-N(7)-)-methyltransferase (242 aa).

Residues Glu66, Glu91, Asp118, and Asp141 each coordinate S-adenosyl-L-methionine. Residue Asp141 is part of the active site. Substrate contacts are provided by residues Lys145, Asp177, and 214–217 (TKFE).

This sequence belongs to the class I-like SAM-binding methyltransferase superfamily. TrmB family. In terms of assembly, monomer.

It carries out the reaction guanosine(46) in tRNA + S-adenosyl-L-methionine = N(7)-methylguanosine(46) in tRNA + S-adenosyl-L-homocysteine. It functions in the pathway tRNA modification; N(7)-methylguanine-tRNA biosynthesis. Functionally, catalyzes the formation of N(7)-methylguanine at position 46 (m7G46) in tRNA. The chain is tRNA (guanine-N(7)-)-methyltransferase from Buchnera aphidicola subsp. Baizongia pistaciae (strain Bp).